The chain runs to 161 residues: ATP synthase subunit b 1 (161 aa).

A helical transmembrane segment spans residues 3 to 23 (LDATFYALVGLILFFVLIAYL).

The protein belongs to the ATPase B chain family. As to quaternary structure, F-type ATPases have 2 components, F(1) - the catalytic core - and F(0) - the membrane proton channel. F(1) has five subunits: alpha(3), beta(3), gamma(1), delta(1), epsilon(1). F(0) has three main subunits: a(1), b(2) and c(10-14). The alpha and beta chains form an alternating ring which encloses part of the gamma chain. F(1) is attached to F(0) by a central stalk formed by the gamma and epsilon chains, while a peripheral stalk is formed by the delta and b chains.

The protein localises to the cell inner membrane. Its function is as follows. F(1)F(0) ATP synthase produces ATP from ADP in the presence of a proton or sodium gradient. F-type ATPases consist of two structural domains, F(1) containing the extramembraneous catalytic core and F(0) containing the membrane proton channel, linked together by a central stalk and a peripheral stalk. During catalysis, ATP synthesis in the catalytic domain of F(1) is coupled via a rotary mechanism of the central stalk subunits to proton translocation. Functionally, component of the F(0) channel, it forms part of the peripheral stalk, linking F(1) to F(0). The sequence is that of ATP synthase subunit b 1 from Sinorhizobium medicae (strain WSM419) (Ensifer medicae).